Consider the following 570-residue polypeptide: MRLVAKLLYLAVLAICGLGIHGALTHPRVTPPVYPSVSFNLTGADTYEPFLRALQEKVILGNHTAFDLPVLNPESQVSDSNRFVLVPLTNPSGDTVTLAIDVVNLYVVAFSSNGKSYFFSGSTAVQRDNLFVDTTQEELNFTGNYTSLERQVGFGRVYIPLGPKSLDQAISSLRTYTLTAGDTKPLARGLLVVIQMVSEAARFRYIELRIRTSITDASEFTPDLLMLSMENNWSSMSSEIQQAQPGGIFAGVVQLRDERNNSIEVTNFRRLFELTYIAVLLYGCAPVTSSSYSNNAIDAQIIKMPVFRGGEYEKVCSVVEVTRRISGWDGLCVDVRYGHYIDGNPVQLRPCGNECNQLWTFRTDGTIRWLGKCLTASSSVMIYDCNTVPPEATKWVVSIDGTITNPHSGLVLTAPQAAEGTALSLENNIHAARQGWTVGDVEPLVTFIVGYKQMCLRENGENNFVWLEDCVLNRVQQEWALYGDGTIRVNSNRSLCVTSEDHEPSDLIVILKCEGSGNQRWVFNTNGTISNPNAKLLMDVAQRDVSLRKIILYRPTGNPNQQWITTTHPA.

The signal sequence occupies residues 1 to 28; the sequence is MRLVAKLLYLAVLAICGLGIHGALTHPR. N-linked (GlcNAc...) asparagine glycans are attached at residues Asn40, Asn62, and Asn144. Glu199 is an active-site residue. Asn260 carries an N-linked (GlcNAc...) asparagine glycan. 3 disulfides stabilise this stretch: Cys284-Cys316, Cys332-Cys351, and Cys373-Cys385. Ricin B-type lectin domains follow at residues 319-439 and 441-566; these read VEVT…WTVG and VEPL…WITT. The 1-alpha repeat unit spans residues 329 to 369; that stretch reads DGLCVDVRYGHYIDGNPVQLRPCGNECNQLWTFRTDGTIRW. The 1-beta repeat unit spans residues 370–405; that stretch reads LGKCLTASSSVMIYDCNTVPPEATKWVVSIDGTITN. The 1-gamma repeat unit spans residues 408 to 440; that stretch reads SGLVLTAPQAAEGTALSLENNIHAARQGWTVGD. One copy of the 2-alpha repeat lies at 452–489; the sequence is KQMCLRENGENNFVWLEDCVLNRVQQEWALYGDGTIRV. Cysteines 455 and 470 form a disulfide. The N-linked (GlcNAc...) asparagine glycan is linked to Asn492. One copy of the 2-beta repeat lies at 493–531; that stretch reads RSLCVTSEDHEPSDLIVILKCEGSGNQRWVFNTNGTISN. A disulfide bridge connects residues Cys496 and Cys513. Asn526 carries N-linked (GlcNAc...) asparagine glycosylation. A 2-gamma repeat occupies 534 to 567; that stretch reads AKLLMDVAQRDVSLRKIILYRPTGNPNQQWITTT.

The protein belongs to the ribosome-inactivating protein family. Type 2 RIP subfamily. Tetramer of four pairs of disulfide bound A-B chains. In terms of processing, the precursor is processed in two chains, A and B, that are linked by a disulfide bond. A small truncated form corresponding roughly to the second ricin B-type lectin domain of the B chain, TrSNAI, can also be produced. Glycosylated. N-glycans of subunit A are (Man)2-3(Xyl)(GlcNAc)2(Fuc) at Asn-40, (GlcNAc)0-2(Man)3(Xyl)(GlcNAc)2(Fuc) or (Man)1-2(GlcNAc)2 at Asn-62, (Man)3(Xyl)(GlcNAc)2(Fuc)0-1 at Asn-144 and (GlcNAc)0-1(Man)3(Xyl)(GlcNAc)2(Fuc) at Asn-260. N-glycans of subunit B are (Man)3(Xyl)(GlcNAc)2(Fuc) at Asn-492 and (Man)6-9(GlcNAc)2 at Asn-526. As to expression, expressed in bark.

The catalysed reaction is Endohydrolysis of the N-glycosidic bond at one specific adenosine on the 28S rRNA.. Neu5Ac(alpha2-6)Gal/GalNAc specific agglutinin. Behaves as a type-2 ribosome-inactivating protein. Strongly inhibits mammalian but not plant ribosomes. The A chain is responsible for inhibiting protein synthesis through the catalytic inactivation of 60S ribosomal subunits by removing adenine from position 4,324 of 28S rRNA. The B chain binds to cell receptors and probably facilitates the entry into the cell of the A chain; B chains are also responsible for cell agglutination (lectin activity). Involved in plant defense against insects. Functionally, binds Neu5Ac(alpha2-6)Gal/GalNAc but has no clear agglutination activity. This chain is Ribosome-inactivating protein SNAI, found in Sambucus nigra (European elder).